The sequence spans 82 residues: Small ribosomal subunit protein bS16 (82 aa).

Belongs to the bacterial ribosomal protein bS16 family.

The sequence is that of Small ribosomal subunit protein bS16 from Francisella tularensis subsp. tularensis (strain FSC 198).